Here is a 607-residue protein sequence, read N- to C-terminus: Major facilitator superfamily multidrug transporter mdrA (607 aa).

A run of 12 helical transmembrane segments spans residues 77–97 (MTVA…TGGV), 110–130 (VATL…LLWA), 139–159 (QIIF…SAGA), 170–190 (FFAG…IADM), 202–222 (LFAA…GFLG), 229–249 (WVMG…TIFV), 305–325 (PIVF…YMLF), 342–362 (VSSL…TYSV), 385–405 (LPPT…FAWT), 413–433 (IVCI…FLGI), 443–463 (IFAA…GAVF), and 478–498 (WASS…FLFY). The disordered stretch occupies residues 523 to 583 (EQMKQAPEPE…ASTRTASSLR (61 aa)). Residues 553-564 (DVSETESNVEEL) show a composition bias toward acidic residues. Residues 572–583 (SRASTRTASSLR) are compositionally biased toward low complexity.

Belongs to the major facilitator superfamily. DHA1 family. Polyamines/proton antiporter (TC 2.A.1.2.16) subfamily.

It is found in the cell membrane. In terms of biological role, MFS transporter involved in the basal level of azole susceptibility. Confers resistance to voriconazole and, to a lesser extent, to fluconazole. The polypeptide is Major facilitator superfamily multidrug transporter mdrA (Aspergillus fumigatus (strain ATCC MYA-4609 / CBS 101355 / FGSC A1100 / Af293) (Neosartorya fumigata)).